The sequence spans 1125 residues: Transient receptor potential cation channel subfamily A member 1 (1125 aa).

The Cytoplasmic portion of the chain corresponds to 1-721 (MKRSLRRVLR…KWCAYGFRAH (721 aa)). ANK repeat units follow at residues 63–94 (ENLC…ALNV), 98–127 (YGNT…NPNL), 131–161 (NMMA…NINL), 165–194 (NGNT…KLCK), 198–227 (WGDY…KTGY), 239–268 (KKAS…HIDM), 272–301 (AKCM…GSSD), 309–338 (NQET…DINS), and 342–371 (EGRS…KVDI). Intrachain disulfides connect Cys193–Cys666, Cys463–Cys666, Cys609–Cys622, Cys622–Cys666, and Cys634–Cys859. Pro395 carries the 4-hydroxyproline; transient modification. 5 ANK repeats span residues 413-442 (DGCT…SVHS), 446-475 (DKKS…DTRL), 482-511 (HGMT…LFLS), 514-543 (NGWT…KCTD), and 548-577 (EGNT…DILL). (E)-cinnamaldehyde is bound by residues Cys415 and Cys422. Cys622 contributes to the (E)-cinnamaldehyde binding site. Cys634 bears the Cysteine sulfenic acid (-SOH); transient; in hyperoxia mark. Cys642, Cys666, and Lys712 together coordinate (E)-cinnamaldehyde. The helical transmembrane segment at 722–742 (MMNLGSYCLGLIPMTLLVVKI) threads the bilayer. Residues 743–767 (QPGMAFNSTGIINETISTHEERINT) are Extracellular-facing. Asn749 and Asn755 each carry an N-linked (GlcNAc...) asparagine glycan. The chain crosses the membrane as a helical span at residues 768–788 (LNSFPLKICMILVFLSSIFGY). The Cytoplasmic segment spans residues 789-806 (CKEVVQIFQQKRNYFLDY). Ca(2+)-binding residues include Glu791, Gln794, Asn808, and Glu811. The helical transmembrane segment at 807 to 827 (NNALEWVIYTTSMIFVLPLFL) threads the bilayer. Topologically, residues 828–832 (DIPAY) are extracellular. Residues 833–853 (MQWQCGAIAIFFYWMNFLLYL) traverse the membrane as a helical segment. At 854-876 (QRFENCGIFIVMLEVIFKTLLRS) the chain is on the cytoplasmic side. Residue Cys859 is modified to Cysteine sulfenic acid (-SOH); transient; in hyperoxia. The chain crosses the membrane as a helical span at residues 877–897 (TGVFIFLLLAFGLSFYVLLNF). Residues 898–904 (QDAFSTP) lie on the Extracellular side of the membrane. An intramembrane region (pore-forming) is located at residues 905 to 925 (LLSLIQTFSMMLGDINYRDAF). The Extracellular portion of the chain corresponds to 926 to 937 (LEPLFRNELAYP). Residues 938–959 (VLTFGQLIAFTMFVPIVLMNLL) form a helical membrane-spanning segment. The Cytoplasmic segment spans residues 960–1125 (IGLAVGDIAE…THCSISHPDI (166 aa)). Positions 1044 to 1073 (MEILKQKYRLKDLTSLLEKQHELIKLIIQK) form a coiled coil. 1048–1054 (KQKYRLK) serves as a coordination point for a 1,2-diacyl-sn-glycero-3-phospho-(1D-myo-inositol).

Belongs to the transient receptor (TC 1.A.4) family. As to quaternary structure, homotetramer. Interacts with TMEM100. Interacts with EGLN1. Interacts with the scorpion wasabi receptor toxin at the same site that electrophiles but in a non-covalent manner. TRPA1 activation by electrophiles occurs though covalent modification of specific cysteine residues in the N-terminal cytoplasmic domain. In terms of processing, hydroxylation is required for TRPA1 activity inhibition in normoxia. In hypoxia, the decrease in oxygen concentration diminishes the activity of the hydroxylase EGLN1, thus relieving TRPA1 from inhibition and ultimately leading to channel activation. Post-translationally, oxidation of Cys-634 and Cys-859 in hyperoxia may override the hydroxylase EGLN1-mediated inhibition, causing TRPA1 activation. Specifically expressed in a subset of nociceptive neurons. Expressed in dorsal root ganglia.

The protein resides in the cell membrane. The catalysed reaction is Ca(2+)(in) = Ca(2+)(out). The enzyme catalyses Mg(2+)(in) = Mg(2+)(out). It carries out the reaction Na(+)(in) = Na(+)(out). It catalyses the reaction K(+)(in) = K(+)(out). The catalysed reaction is Zn(2+)(in) = Zn(2+)(out). With respect to regulation, electrophilic ligands activate the channel by covalent modification of intracellular cysteines; Cys-622 plays a key role in covalent binding of electrophiles. Extracellular Ca(2+) both potentiates and inactivates TRPA1; a rapid potentiation follows by slow desensitization. Activated by increase in intracellular Ca(2+) concentration. Inhibited by ruthenium red, a potent blocker of TRPV channels and selectively by A-967079. Activated by benzyl isothiocyanate (BITC), iodoacetamide, sulfhydryl reactive agent MTSEA, N-methyl maleimide (NMM), N-ethylmaleimide (NEM), and 2-aminoethyldiphenylborinate (2-APB). Also activated by hyperoxia. Acivated by intracellular Zn(2+). TRPA1 activation may critically depend on the presence of small intracellular compounds such as polyphosphates. Ligand-activated Ca(2+)-permeable, nonselective cation channel. Involved in pain detection and possibly also in cold perception, oxygen concentration perception, cough, itch, and inner ear function. Has a relatively high Ca(2+) selectivity, with a preference for divalent over monovalent cations (Ca(2+) &gt; Ba(2+) &gt; Mg(2+) &gt; NH4(+) &gt; Li(+) &gt; K(+)), the influx of cation into the cytoplasm, leads to membrane depolarization. Has a central role in the pain response to endogenous inflammatory mediators, such as bradykinin and to a diverse array of irritants. Activated by a large variety of structurally unrelated electrophilic and non-electrophilic chemical compounds, such as allylthiocyanate (AITC) from mustard oil or wasabi, cinnamaldehyde, diallyl disulfide (DADS) from garlic, and acrolein, an environmental irritant. Electrophilic ligands activate TRPA1 by interacting with critical N-terminal Cys residues in a covalent manner. Non-electrophile agonists bind at distinct sites in the transmembrane domain to promote channel activation. Also acts as an ionotropic cannabinoid receptor by being activated by delta(9)-tetrahydrocannabinol (THC), the psychoactive component of marijuana. May be a component for the mechanosensitive transduction channel of hair cells in inner ear, thereby participating in the perception of sounds. This Rattus norvegicus (Rat) protein is Transient receptor potential cation channel subfamily A member 1.